Here is a 26-residue protein sequence, read N- to C-terminus: Mitochondrial import receptor subunit TOM7-2 (26 aa).

It belongs to the Tom7 family. Forms part of the preprotein translocase complex of the outer mitochondrial membrane (TOM complex).

It localises to the mitochondrion outer membrane. Functionally, seems to act as a modulator of the dynamics of the mitochondrial protein transport machinery. Seems to promote the dissociation of subunits of the outer membrane translocase. The polypeptide is Mitochondrial import receptor subunit TOM7-2 (TOM7-2) (Solanum tuberosum (Potato)).